Here is a 548-residue protein sequence, read N- to C-terminus: ATP synthase subunit alpha (548 aa).

172–179 (GDRKTGKT) contributes to the ATP binding site. A disordered region spans residues 526–548 (AEAMDEADVEKESVKVRKPAPKK).

Belongs to the ATPase alpha/beta chains family. F-type ATPases have 2 components, CF(1) - the catalytic core - and CF(0) - the membrane proton channel. CF(1) has five subunits: alpha(3), beta(3), gamma(1), delta(1), epsilon(1). CF(0) has three main subunits: a(1), b(2) and c(9-12). The alpha and beta chains form an alternating ring which encloses part of the gamma chain. CF(1) is attached to CF(0) by a central stalk formed by the gamma and epsilon chains, while a peripheral stalk is formed by the delta and b chains.

The protein resides in the cell membrane. It catalyses the reaction ATP + H2O + 4 H(+)(in) = ADP + phosphate + 5 H(+)(out). Functionally, produces ATP from ADP in the presence of a proton gradient across the membrane. The alpha chain is a regulatory subunit. The protein is ATP synthase subunit alpha of Mycolicibacterium vanbaalenii (strain DSM 7251 / JCM 13017 / BCRC 16820 / KCTC 9966 / NRRL B-24157 / PYR-1) (Mycobacterium vanbaalenii).